Consider the following 1258-residue polypeptide: Structural polyprotein (1258 aa).

The segment at 41-75 is host transcription inhibition; that stretch reads PQAQQMQQLIAAVNTLAIRQNGTRTPGQQRRKRQP. The disordered stretch occupies residues 59-114; it reads RQNGTRTPGQQRRKRQPNKPKRKQTPPKKQNPAKTKNKQKPQPPKPKKRKPGKRER. The Nuclear localization signal motif lies at 68-109; that stretch reads QQRRKRQPNKPKRKQTPPKKQNPAKTKNKQKPQPPKPKKRKP. Basic residues-rich tracts occupy residues 69–84 and 93–114; these read QRRK…KQTP and TKNK…KRER. Positions 96–124 are binding to the viral RNA; sequence KQKPQPPKPKKRKPGKRERKCMKIENDCI. The ribosome-binding stretch occupies residues 109-123; sequence PGKRERKCMKIENDC. An intrachain disulfide couples cysteine 123 to cysteine 138. The 149-residue stretch at 123–271 folds into the Peptidase S3 domain; it reads CIFEVKLEGK…RITPEGTEEW (149 aa). The active-site Charge relay system is the histidine 149. A Nuclear export signal motif is present at residues 154 to 164; sequence IDNPDLAKLAF. The tract at residues 165 to 170 is interaction with spike glycoprotein E2; sequence KKSSKY. Aspartate 171 (charge relay system) is an active-site residue. Residues 193-203 form a dimerization of the capsid protein region; it reads PEGHYNWHHGA. The active-site Charge relay system is serine 223. The segment at 229 to 233 is dimerization of the capsid protein; the sequence is DNKGR. A functions as an uncleaved signal peptide for the precursor of protein E3/E2 region spans residues 272–284; it reads TALVTTACILSNL. 9 disulfides stabilise this stretch: cysteine 279–cysteine 288, cysteine 293–cysteine 297, cysteine 296–cysteine 328, cysteine 356–cysteine 462, cysteine 359–cysteine 365, cysteine 428–cysteine 442, cysteine 490–cysteine 601, cysteine 538–cysteine 562, and cysteine 540–cysteine 557. Asparagine 283 carries N-linked (GlcNAc...) asparagine; by host glycosylation. Residues 338–696 lie on the Extracellular side of the membrane; it reads GLTEDYKAYK…PHEIFSYYYG (359 aa). Interaction with host Mxra8 receptor regions lie at residues 363–366 and 399–401; these read QFCY and HSW. The segment at 521–524 is interaction with host Mxra8 receptor; sequence TGNK. Residue asparagine 537 is glycosylated (N-linked (GlcNAc...) asparagine; by host). The tract at residues 553-559 is interaction with host Mxra8 receptor; sequence EFDNCEV. Asparagine 598 carries an N-linked (GlcNAc...) asparagine; by host glycan. A helical transmembrane segment spans residues 697–717; it reads LYPATTVAVCVGLACVILLAL. At 718–758 the chain is on the cytoplasmic side; the sequence is SASCCLCVSARNKCLTPYALTPGAVVPCTLSLLCCAPRAKA. An interaction with the capsid protein region spans residues 726–730; that stretch reads SARNK. Residues cysteine 731, cysteine 751, and cysteine 752 are each lipidated (S-palmitoyl cysteine; by host). Residues 731–751 form a transient transmembrane before p62-6K protein processing region; the sequence is CLTPYALTPGAVVPCTLSLLC. A disulfide bridge links cysteine 731 with cysteine 752. The Extracellular portion of the chain corresponds to 759–773; it reads ATFAETAAYLWAENQ. Residues 774-794 form a helical membrane-spanning segment; that stretch reads TVFWMQFAIPVACFMIVTYCL. The Cytoplasmic segment spans residues 795–796; that stretch reads RH. Residues 797-817 traverse the membrane as a helical segment; that stretch reads LMLCCRTASFLVAVSLGMGAT. Extracellular segments follow at residues 818–819 and 820–1234; these read QA and YEHS…HTMG. 4 disulfides stabilise this stretch: cysteine 868–cysteine 933, cysteine 881–cysteine 913, cysteine 882–cysteine 915, and cysteine 887–cysteine 897. Positions 903–920 are E1 fusion peptide loop; the sequence is VYPFLWGGAYCFCDSENT. N-linked (GlcNAc...) asparagine; by host glycans are attached at residues asparagine 960 and asparagine 1089. 4 cysteine pairs are disulfide-bonded: cysteine 1078–cysteine 1090, cysteine 1120–cysteine 1195, cysteine 1125–cysteine 1199, and cysteine 1147–cysteine 1189. Residues 1235–1255 form a helical membrane-spanning segment; the sequence is GATVVIAIGITIFLIVTCIAF. A lipid anchor (S-palmitoyl cysteine; by host) is attached at cysteine 1252. Over 1256–1258 the chain is Cytoplasmic; that stretch reads SRH.

In terms of assembly, homodimer. Homomultimer. Interacts with host karyopherin KPNA4; this interaction allows the nuclear import of the viral capsid protein. Interacts with spike glycoprotein E2. Interacts with host IRAK1; the interaction leads to inhibition of IRAK1-dependent signaling. As to quaternary structure, the precursor of protein E3/E2 and E1 form a heterodimer shortly after synthesis. The precursor of protein E3/E2 and E1 form a heterodimer shortly after synthesis. Processing of the precursor of protein E3/E2 into E2 and E3 results in a heterodimer of the spike glycoproteins E2 and E1. Spike at virion surface are constituted of a trimer of E2-E1 heterodimers. After target cell attachment and endocytosis, E1 change conformation to form homotrimers. Interacts with 6K protein. In terms of assembly, interacts with spike glycoprotein E1. Processing of the precursor of protein E3/E2 into E2 and E3 results in a heterodimer of the spike glycoproteins E2 and E1. Spike at virion surface are constituted of a trimer of E2-E1 heterodimers. Interacts with 6K protein. Interacts with host MXRA8; this interaction mediates virus entry. As to quaternary structure, oligomer. Interacts with spike glycoprotein E1. Interacts with spike glycoprotein E2. Structural polyprotein: Specific enzymatic cleavages in vivo yield mature proteins. Capsid protein is auto-cleaved during polyprotein translation, unmasking a signal peptide at the N-terminus of the precursor of E3/E2. The remaining polyprotein is then targeted to the host endoplasmic reticulum, where host signal peptidase cleaves it into pE2, 6K and E1 proteins. pE2 is further processed to mature E3 and E2 by host furin in trans-Golgi vesicle. Post-translationally, palmitoylated via thioester bonds. These palmitoylations may induce disruption of the C-terminus transmembrane. This would result in the reorientation of E2 C-terminus from lumenal to cytoplasmic side. In terms of processing, N-glycosylated. Palmitoylated via thioester bonds.

It is found in the virion. Its subcellular location is the host cytoplasm. The protein localises to the host cell membrane. It localises to the host nucleus. The protein resides in the virion membrane. It is found in the host Golgi apparatus. Its subcellular location is the host trans-Golgi network. The protein localises to the host endoplasmic reticulum. It carries out the reaction Autocatalytic release of the core protein from the N-terminus of the togavirus structural polyprotein by hydrolysis of a -Trp-|-Ser- bond.. Functionally, forms an icosahedral capsid with a T=4 symmetry composed of 240 copies of the capsid protein surrounded by a lipid membrane through which penetrate 80 spikes composed of trimers of E1-E2 heterodimers. The capsid protein binds to the viral RNA genome at a site adjacent to a ribosome binding site for viral genome translation following genome release. Possesses a protease activity that results in its autocatalytic cleavage from the nascent structural protein. Following its self-cleavage, the capsid protein transiently associates with ribosomes, and within several minutes the protein binds to viral RNA and rapidly assembles into icosahedric core particles. The resulting nucleocapsid eventually associates with the cytoplasmic domain of the spike glycoprotein E2 at the cell membrane, leading to budding and formation of mature virions. In case of infection, new virions attach to target cells and after clathrin-mediated endocytosis their membrane fuses with the host endosomal membrane. This leads to the release of the nucleocapsid into the cytoplasm, followed by an uncoating event necessary for the genomic RNA to become accessible. The uncoating might be triggered by the interaction of capsid proteins with ribosomes. Binding of ribosomes would release the genomic RNA since the same region is genomic RNA-binding and ribosome-binding. Specifically inhibits interleukin-1 receptor-associated kinase 1/IRAK1-dependent signaling during viral entry, representing a means by which the alphaviruses may evade innate immune detection and activation prior to viral gene expression. Its function is as follows. Provides the signal sequence for the translocation of the precursor of protein E3/E2 to the host endoplasmic reticulum. Furin-cleaved E3 remains associated with spike glycoprotein E1 and mediates pH protection of the latter during the transport via the secretory pathway. After virion release from the host cell, the assembly protein E3 is gradually released in the extracellular space. Plays a role in viral attachment to target host cell, by binding to the cell receptor MXRA8. Synthesized as a p62 precursor which is processed by furin at the cell membrane just before virion budding, giving rise to E2-E1 heterodimer. The p62-E1 heterodimer is stable, whereas E2-E1 is unstable and dissociate at low pH. p62 is processed at the last step, presumably to avoid E1 fusion activation before its final export to cell surface. E2 C-terminus contains a transitory transmembrane that would be disrupted by palmitoylation, resulting in reorientation of the C-terminal tail from lumenal to cytoplasmic side. This step is critical since E2 C-terminus is involved in budding by interacting with capsid proteins. This release of E2 C-terminus in cytoplasm occurs lately in protein export, and precludes premature assembly of particles at the endoplasmic reticulum membrane. In terms of biological role, acts as a viroporin that participates in virus glycoprotein processing and transport to the plasma membrane, cell permeabilization and budding of viral particles. Disrupts the calcium homeostasis of the cell, probably at the endoplasmic reticulum level. This leads to cytoplasmic calcium elevation. Because of its lipophilic properties, the 6K protein is postulated to influence the selection of lipids that interact with the transmembrane domains of the glycoproteins, which, in turn, affects the deformability of the bilayer required for the extreme curvature that occurs as budding proceeds. Present in low amount in virions, about 3% compared to viral glycoproteins. Functionally, class II viral fusion protein. Fusion activity is inactive as long as E1 is bound to E2 in mature virion. After virus attachment to target cell and endocytosis, acidification of the endosome induce dissociation of E1/E2 heterodimer and concomitant trimerization of the E1 subunits. This E1 trimer is fusion active, and promotes release of viral nucleocapsid in cytoplasm after endosome and viral membrane fusion. Efficient fusion requires the presence of cholesterol and sphingolipid in the target membrane. The chain is Structural polyprotein from Middelburg virus.